The primary structure comprises 115 residues: U3-lycotoxin-Ls1k (115 aa).

The signal sequence occupies residues 1 to 20 (MKFVLLFGVLLVTLFSYSSA). The propeptide occupies 21–44 (EMFDDFDQADEDELLSLIEKEEAR). 4 disulfides stabilise this stretch: C48–C63, C55–C72, C62–C87, and C74–C85.

The protein belongs to the neurotoxin 19 (CSTX) family. 01 subfamily. Expressed by the venom gland.

It localises to the secreted. This chain is U3-lycotoxin-Ls1k, found in Lycosa singoriensis (Wolf spider).